The primary structure comprises 208 residues: Small ribosomal subunit protein uS2 (208 aa).

The protein belongs to the universal ribosomal protein uS2 family.

This is Small ribosomal subunit protein uS2 from Cenarchaeum symbiosum (strain A).